We begin with the raw amino-acid sequence, 372 residues long: MNSGIDLQASFIESLNQLGIPSGAAKALWIPFPSFLMIIGATVGVLVVVWLERKISAAAQQRIGPEYAGPLGVLQPVADGIKLVFKEDVIPAKADPWLFTLGPVLVVLPVFVSYLIVPFGQNLVITDLNVGIFFWIALSSIAPIGLLMAGYASNNKYSLLGGLRAAAQSISYEIPLALSVLAIVMMSNSLSTIDIVEQQSGYGILGWNIWRQPVGFFIFWIAALAECERLPFDLPEAEEEIVAGYQTEYAGMKFALFYLGSYVNLVLSALVFAILYLGGWEFPVPLDKLAEWLGVSEDSSWLQVITASLGITMTVLKAYFLVFIAVLMRWTVPRVRIDQLLDLGWKFLLPVSLVNLLLTAALKLAFPVAFGG.

A run of 8 helical transmembrane segments spans residues 29–49 (WIPF…LVVV), 97–117 (WLFT…YLIV), 130–150 (VGIF…LMAG), 176–196 (LALS…IDIV), 204–224 (ILGW…IAAL), 254–274 (FALF…VFAI), 308–328 (SLGI…AVLM), and 347–367 (FLLP…LAFP).

It belongs to the complex I subunit 1 family. As to quaternary structure, NDH-1 is composed of at least 11 different subunits.

The protein resides in the cellular thylakoid membrane. It catalyses the reaction a plastoquinone + NADH + (n+1) H(+)(in) = a plastoquinol + NAD(+) + n H(+)(out). The catalysed reaction is a plastoquinone + NADPH + (n+1) H(+)(in) = a plastoquinol + NADP(+) + n H(+)(out). Functionally, NDH-1 shuttles electrons from an unknown electron donor, via FMN and iron-sulfur (Fe-S) centers, to quinones in the respiratory and/or the photosynthetic chain. The immediate electron acceptor for the enzyme in this species is believed to be plastoquinone. Couples the redox reaction to proton translocation, and thus conserves the redox energy in a proton gradient. The sequence is that of NAD(P)H-quinone oxidoreductase subunit 1 from Crocosphaera subtropica (strain ATCC 51142 / BH68) (Cyanothece sp. (strain ATCC 51142)).